Reading from the N-terminus, the 170-residue chain is Peptide deformylase (170 aa).

Fe cation contacts are provided by Cys-93 and His-135. The active site involves Glu-136. His-139 provides a ligand contact to Fe cation.

The protein belongs to the polypeptide deformylase family. The cofactor is Fe(2+).

The enzyme catalyses N-terminal N-formyl-L-methionyl-[peptide] + H2O = N-terminal L-methionyl-[peptide] + formate. In terms of biological role, removes the formyl group from the N-terminal Met of newly synthesized proteins. Requires at least a dipeptide for an efficient rate of reaction. N-terminal L-methionine is a prerequisite for activity but the enzyme has broad specificity at other positions. The sequence is that of Peptide deformylase from Syntrophobacter fumaroxidans (strain DSM 10017 / MPOB).